Consider the following 338-residue polypeptide: Aspartate carbamoyltransferase catalytic subunit (338 aa).

Arg-72 and Thr-73 together coordinate carbamoyl phosphate. Residue Lys-100 coordinates L-aspartate. Positions 122, 152, and 155 each coordinate carbamoyl phosphate. Arg-186 and Arg-243 together coordinate L-aspartate. Positions 284 and 285 each coordinate carbamoyl phosphate.

This sequence belongs to the aspartate/ornithine carbamoyltransferase superfamily. ATCase family. In terms of assembly, heterododecamer (2C3:3R2) of six catalytic PyrB chains organized as two trimers (C3), and six regulatory PyrI chains organized as three dimers (R2).

The catalysed reaction is carbamoyl phosphate + L-aspartate = N-carbamoyl-L-aspartate + phosphate + H(+). It functions in the pathway pyrimidine metabolism; UMP biosynthesis via de novo pathway; (S)-dihydroorotate from bicarbonate: step 2/3. Functionally, catalyzes the condensation of carbamoyl phosphate and aspartate to form carbamoyl aspartate and inorganic phosphate, the committed step in the de novo pyrimidine nucleotide biosynthesis pathway. The protein is Aspartate carbamoyltransferase catalytic subunit of Acinetobacter baumannii (strain SDF).